A 91-amino-acid chain; its full sequence is Small ribosomal subunit protein bS16 (91 aa).

The protein belongs to the bacterial ribosomal protein bS16 family.

This chain is Small ribosomal subunit protein bS16, found in Limosilactobacillus fermentum (strain NBRC 3956 / LMG 18251) (Lactobacillus fermentum).